Here is a 591-residue protein sequence, read N- to C-terminus: L-fucose isomerase (591 aa).

Active-site proton acceptor residues include Glu-337 and Asp-361. Glu-337, Asp-361, and His-528 together coordinate Mn(2+).

Belongs to the L-fucose isomerase family. In terms of assembly, homohexamer. The cofactor is Mn(2+).

Its subcellular location is the cytoplasm. It catalyses the reaction L-fucose = L-fuculose. Its pathway is carbohydrate degradation; L-fucose degradation; L-lactaldehyde and glycerone phosphate from L-fucose: step 1/3. Functionally, converts the aldose L-fucose into the corresponding ketose L-fuculose. The protein is L-fucose isomerase of Escherichia coli (strain SMS-3-5 / SECEC).